The chain runs to 293 residues: 1D-myo-inositol 2-acetamido-2-deoxy-alpha-D-glucopyranoside deacetylase 2 (293 aa).

Histidine 6, aspartate 9, and histidine 142 together coordinate Zn(2+).

It belongs to the MshB deacetylase family. Zn(2+) is required as a cofactor.

The catalysed reaction is 1D-myo-inositol 2-acetamido-2-deoxy-alpha-D-glucopyranoside + H2O = 1D-myo-inositol 2-amino-2-deoxy-alpha-D-glucopyranoside + acetate. Functionally, catalyzes the deacetylation of 1D-myo-inositol 2-acetamido-2-deoxy-alpha-D-glucopyranoside (GlcNAc-Ins) in the mycothiol biosynthesis pathway. This Frankia alni (strain DSM 45986 / CECT 9034 / ACN14a) protein is 1D-myo-inositol 2-acetamido-2-deoxy-alpha-D-glucopyranoside deacetylase 2.